Reading from the N-terminus, the 282-residue chain is MKRIGAHVSASGGVSNAPLNAAKIGADAFALFVKNQRQWSAKPLENQEIENFKQNLKISKILPEHILAHDSYLINLGHPNLQNRQKSLETFIDEINRCEILGIRLLNFHPGSHLKLISEQECLKNIAESINKALANTNRVKLVIENTAGQGSNLGYHFDQIAFIIKNVSDKSRIGVCIDTCHAFAGGYDFRTKAAYEKTMSEFDAKIGYKFLSGMHLNDTKNELGIRKDRHESLGKGFLGLESFENIMNDKNIDEIPMILETIDETIWPDEIKILRNLIKGN.

Zn(2+) is bound by residues His-69, His-109, Glu-145, Asp-179, His-182, His-216, Asp-229, His-231, and Glu-261.

It belongs to the AP endonuclease 2 family. Zn(2+) is required as a cofactor.

It carries out the reaction Endonucleolytic cleavage to 5'-phosphooligonucleotide end-products.. Endonuclease IV plays a role in DNA repair. It cleaves phosphodiester bonds at apurinic or apyrimidinic (AP) sites, generating a 3'-hydroxyl group and a 5'-terminal sugar phosphate. This Campylobacter hominis (strain ATCC BAA-381 / DSM 21671 / CCUG 45161 / LMG 19568 / NCTC 13146 / CH001A) protein is Probable endonuclease 4.